An 882-amino-acid chain; its full sequence is MSSGSLSSIRKKFLEFFVKNGHKLYASAPLVATGDASLLFTSAGMVPFKQAFTSGSSVDGAKTAVSSQKCLRAGGKHNDLENVGYTNRHHTFFEMLGNFSFGDYFKERAIELAWRFVTEEMCLSKDRLWITVYSEDQEAFDIWKKITGFPDDRIIKISTSDNFWSMGDTGPCGPCSEIFYDYGEHVQGGPPGSKDADGPRFTEVWNLVFMQFCRDEHGELNPLPHKCIDTGMGLERAAAVVQGVCDNYDTDLFKAVIRKSQDVFGSPDNSIAHRVIADHIRAAAFLISEGLSPGNEGRNYVLRRIIRRAVRYAYQLDPSNVAIHEVLPVLTKEGSAGYMGDAYPELVRCEQSITSTLRSEGEGFVDTLRRGMALLEKEIGGLSPGQVLLGDVAFKLYDTFGFPLDITLDIAKERGLKFDQEGFNKGMGEQKARSRKHWVGSGEDASHRLWEELQAQHKNTRFVGYDCCSTKASVLSITRDGMAVQSVNSGEKACLLLDVSPFYAESGGQEGDKGSITGVSGVKNSGGANIAEVTYTRKASNLHIHECTITSGVFNVGDTVDAAIDVDRRERLKANHSATHILHSVLRTHIDGNIQQKGSLVAEDKLRFDFNYASALTKEQIALIEREVNRRIMSNKPVLTDHCSFEAAVQGGAIALFGEKYSEHSVRVVSMGDSKELCGGTHVRYTGDIGAFKIVSESGIALGVRRIEAITGQSVVDGLRKDGDILLHISERLGVPVGEVSEGLERLLKEKLELKKKLVCAWHEIIKSSISPVNCGAGVVLHCGYFPTIPVDAIMEFMKSARKAERGIFAIATAVDGKAVLIIGVGDTASKVLGASELVKTLADLQGKGGGNAGLARVSLEVGNVQEALSTILNKVTAAFPT.

Zn(2+) is bound by residues H576, H580, C678, and H682.

Belongs to the class-II aminoacyl-tRNA synthetase family. It depends on Zn(2+) as a cofactor.

It is found in the cytoplasm. The enzyme catalyses tRNA(Ala) + L-alanine + ATP = L-alanyl-tRNA(Ala) + AMP + diphosphate. Its function is as follows. Catalyzes the attachment of alanine to tRNA(Ala) in a two-step reaction: alanine is first activated by ATP to form Ala-AMP and then transferred to the acceptor end of tRNA(Ala). Also edits incorrectly charged Ser-tRNA(Ala) and Gly-tRNA(Ala) via its editing domain. The protein is Alanine--tRNA ligase of Anaplasma marginale (strain St. Maries).